A 184-amino-acid polypeptide reads, in one-letter code: UPF0398 protein BCG9842_B3730 (184 aa).

It belongs to the UPF0398 family.

The chain is UPF0398 protein BCG9842_B3730 from Bacillus cereus (strain G9842).